Consider the following 98-residue polypeptide: Citrate lyase acyl carrier protein 1 (98 aa).

At Ser14 the chain carries O-(phosphoribosyl dephospho-coenzyme A)serine.

It belongs to the CitD family. Oligomer with a subunit composition of (alpha,beta,gamma)6.

Its subcellular location is the cytoplasm. Its function is as follows. Covalent carrier of the coenzyme of citrate lyase. The sequence is that of Citrate lyase acyl carrier protein 1 from Salmonella paratyphi A (strain ATCC 9150 / SARB42).